We begin with the raw amino-acid sequence, 377 residues long: UPF0425 pyridoxal phosphate-dependent protein MTH_1914 (377 aa).

At K207 the chain carries N6-(pyridoxal phosphate)lysine.

This sequence belongs to the UPF0425 family. Pyridoxal 5'-phosphate serves as cofactor.

The chain is UPF0425 pyridoxal phosphate-dependent protein MTH_1914 from Methanothermobacter thermautotrophicus (strain ATCC 29096 / DSM 1053 / JCM 10044 / NBRC 100330 / Delta H) (Methanobacterium thermoautotrophicum).